Reading from the N-terminus, the 155-residue chain is V-type proton ATPase 16 kDa proteolipid subunit c (155 aa).

At 1–10 the chain is on the lumenal side; that stretch reads MSEAKSGPEY. A helical transmembrane segment spans residues 11–33; sequence ASFFAVMGASAAMVFSALGAAYG. Topologically, residues 34-55 are cytoplasmic; it reads TAKSGTGIAAMSVMRPEMIMKS. Residues 56 to 76 form a helical membrane-spanning segment; the sequence is IIPVVMAGIIAIYGLVVAVLI. The Lumenal segment spans residues 77 to 92; the sequence is ANSLNDGISLYRSFLQ. Residues 93–114 traverse the membrane as a helical segment; that stretch reads LGAGLSVGLSGLAAGFAIGIVG. Residues 115-131 lie on the Cytoplasmic side of the membrane; that stretch reads DAGVRGTAQQPRLFVGM. A helical transmembrane segment spans residues 132–152; sequence ILILIFAEVLGLYGLIVALIL. Over 153-155 the chain is Lumenal; the sequence is STK.

It belongs to the V-ATPase proteolipid subunit family. V-ATPase is a heteromultimeric enzyme made up of two complexes: the ATP-hydrolytic V1 complex and the proton translocation V0 complex. The V1 complex consists of three catalytic AB heterodimers that form a heterohexamer, three peripheral stalks each consisting of EG heterodimers, one central rotor including subunits D and F, and the regulatory subunits C and H. The proton translocation complex V0 consists of the proton transport subunit a, a ring of proteolipid subunits c9c'', rotary subunit d, subunits e and f, and the accessory subunits ATP6AP1/Ac45 and ATP6AP2/PRR. Interacts with the V0 complex V-ATPase subunit a4 ATP6V0A4. Interacts with LASS2. Interacts with RNF182; this interaction leads to ubiquitination and degradation via the proteasome pathway. Post-translationally, ubiquitinated by RNF182, leading to its degradation via the ubiquitin-proteasome pathway.

The protein localises to the cytoplasmic vesicle. It is found in the clathrin-coated vesicle membrane. It localises to the secretory vesicle. The protein resides in the synaptic vesicle membrane. In terms of biological role, proton-conducting pore forming subunit of the V0 complex of vacuolar(H+)-ATPase (V-ATPase), a multisubunit enzyme composed of a peripheral complex (V1) that hydrolyzes ATP and a membrane integral complex (V0) that translocates protons. V-ATPase is responsible for acidifying and maintaining the pH of intracellular compartments and in some cell types, is targeted to the plasma membrane, where it is responsible for acidifying the extracellular environment. The sequence is that of V-type proton ATPase 16 kDa proteolipid subunit c (ATP6V0C) from Ovis aries (Sheep).